The sequence spans 224 residues: Prolactin-3D1 (224 aa).

The signal sequence occupies residues 1–29; the sequence is MQLTLNLSGSAGMQLLLLVSSLLLWENVS. Disulfide bonds link Cys-81/Cys-199 and Cys-216/Cys-224. 2 N-linked (GlcNAc...) asparagine glycosylation sites follow: Asn-109 and Asn-158.

The protein belongs to the somatotropin/prolactin family.

Its subcellular location is the secreted. The protein is Prolactin-3D1 (Prl3d1) of Mus musculus (Mouse).